Reading from the N-terminus, the 432-residue chain is Calcium uptake protein 2, mitochondrial (432 aa).

Residues 1–22 constitute a mitochondrion transit peptide; that stretch reads MAAAAGRSAWLAAWGGRLRRGL. Residues 169–204 enclose the EF-hand 1 domain; it reads KPHSGFHVAFKMLDVDGNEMIERKEFVKLQKIISKQ. Positions 182, 184, 186, 188, 190, and 193 each coordinate Ca(2+). Serine 202 carries the phosphoserine modification. The EF-hand 2; degenerate domain occupies 224–259; that stretch reads EPGVNTTLQVRFFGKRGEKKLHYKEFRRFMENLQTE. Positions 290–325 constitute an EF-hand 3; degenerate domain; it reads TENKDIYWRNVREKLSVGESISLDEFKSFCHFTTHL. The 36-residue stretch at 359-394 folds into the EF-hand 4 domain; that stretch reads LSDNLLDTVFKIFDLDGDECLSHGEFLGVLKNRMHR. The Ca(2+) site is built by aspartate 372, aspartate 374, aspartate 376, cysteine 378, and glutamate 383.

This sequence belongs to the MICU1 family. MICU2 subfamily. As to quaternary structure, heterodimer; disulfide-linked; heterodimerizes with MICU1. Component of the uniplex complex, composed of MCU, EMRE/SMDT1, MICU1 and MICU2 in a 4:4:1:1 stoichiometry. Predominantly expressed in stomach, intestine, skeletal muscle, kidney, heart, testis, prostate and uterus.

Its subcellular location is the mitochondrion intermembrane space. It is found in the mitochondrion inner membrane. Its function is as follows. Calcium sensor of the mitochondrial calcium uniporter (MCU) channel, which senses calcium level via its EF-hand domains. MICU1 and MICU2 form a disulfide-linked heterodimer that stimulates and inhibits MCU activity, depending on the concentration of calcium. At low calcium levels, MICU1 occludes the pore of the MCU channel, preventing mitochondrial calcium uptake. At higher calcium levels, calcium-binding to MICU1 and MICU2 induces a conformational change that weakens MCU-MICU1 interactions and moves the MICU1-MICU2 heterodimer away from the pore, allowing calcium permeation through the MCU channel. This is Calcium uptake protein 2, mitochondrial from Mus musculus (Mouse).